The primary structure comprises 145 residues: Holo-[acyl-carrier-protein] synthase (145 aa).

The Mg(2+) site is built by Asp8 and Glu59.

Belongs to the P-Pant transferase superfamily. AcpS family. Mg(2+) is required as a cofactor.

The protein resides in the cytoplasm. It carries out the reaction apo-[ACP] + CoA = holo-[ACP] + adenosine 3',5'-bisphosphate + H(+). Transfers the 4'-phosphopantetheine moiety from coenzyme A to a Ser of acyl-carrier-protein. The protein is Holo-[acyl-carrier-protein] synthase of Granulibacter bethesdensis (strain ATCC BAA-1260 / CGDNIH1).